A 328-amino-acid chain; its full sequence is Methionyl-tRNA formyltransferase (328 aa).

110–113 (SLLP) is a (6S)-5,6,7,8-tetrahydrofolate binding site.

It belongs to the Fmt family.

The catalysed reaction is L-methionyl-tRNA(fMet) + (6R)-10-formyltetrahydrofolate = N-formyl-L-methionyl-tRNA(fMet) + (6S)-5,6,7,8-tetrahydrofolate + H(+). In terms of biological role, attaches a formyl group to the free amino group of methionyl-tRNA(fMet). The formyl group appears to play a dual role in the initiator identity of N-formylmethionyl-tRNA by promoting its recognition by IF2 and preventing the misappropriation of this tRNA by the elongation apparatus. The polypeptide is Methionyl-tRNA formyltransferase (Prochlorococcus marinus (strain AS9601)).